The following is a 489-amino-acid chain: Endoglucanase 4 (489 aa).

An N-terminal signal peptide occupies residues 1-25; that stretch reads MAGKSFMTPAIMLAMLLLISPETYA. Aspartate 81 serves as the catalytic Nucleophile. Histidine 409 is a catalytic residue. A glycan (N-linked (GlcNAc...) asparagine) is linked at asparagine 453. Catalysis depends on residues aspartate 460 and glutamate 469.

Belongs to the glycosyl hydrolase 9 (cellulase E) family.

The protein localises to the secreted. The catalysed reaction is Endohydrolysis of (1-&gt;4)-beta-D-glucosidic linkages in cellulose, lichenin and cereal beta-D-glucans.. This is Endoglucanase 4 from Arabidopsis thaliana (Mouse-ear cress).